Here is a 251-residue protein sequence, read N- to C-terminus: UPF0309 protein SGR_3073 (251 aa).

The SIS domain maps to 36–221 (VADTVASGGR…EQLVARGIEP (186 aa)).

The protein belongs to the UPF0309 family.

The polypeptide is UPF0309 protein SGR_3073 (Streptomyces griseus subsp. griseus (strain JCM 4626 / CBS 651.72 / NBRC 13350 / KCC S-0626 / ISP 5235)).